Here is a 317-residue protein sequence, read N- to C-terminus: Nicotianamine synthase (317 aa).

Belongs to the nicotianamine synthase (NAS)-like family. Homomultimer. In terms of tissue distribution, leaves and roots.

It carries out the reaction 3 S-adenosyl-L-methionine = nicotianamine + 3 S-methyl-5'-thioadenosine + 3 H(+). Its function is as follows. Synthesizes nicotianamine, a polyamine that serves as a sensor for the physiological iron status within the plant, and/or might be involved in the transport of iron. This is Nicotianamine synthase (CHLN) from Solanum lycopersicum (Tomato).